A 398-amino-acid polypeptide reads, in one-letter code: 1-deoxy-D-xylulose 5-phosphate reductoisomerase (398 aa).

Positions 11, 12, 13, 14, and 125 each coordinate NADPH. Lys126 contacts 1-deoxy-D-xylulose 5-phosphate. Glu127 is a binding site for NADPH. Asp151 contacts Mn(2+). Ser152, Glu153, Ser186, and His209 together coordinate 1-deoxy-D-xylulose 5-phosphate. Glu153 lines the Mn(2+) pocket. An NADPH-binding site is contributed by Gly215. 1-deoxy-D-xylulose 5-phosphate contacts are provided by Ser222, Asn227, Lys228, and Glu231. Glu231 lines the Mn(2+) pocket.

Belongs to the DXR family. Mg(2+) serves as cofactor. It depends on Mn(2+) as a cofactor.

It catalyses the reaction 2-C-methyl-D-erythritol 4-phosphate + NADP(+) = 1-deoxy-D-xylulose 5-phosphate + NADPH + H(+). It participates in isoprenoid biosynthesis; isopentenyl diphosphate biosynthesis via DXP pathway; isopentenyl diphosphate from 1-deoxy-D-xylulose 5-phosphate: step 1/6. Functionally, catalyzes the NADPH-dependent rearrangement and reduction of 1-deoxy-D-xylulose-5-phosphate (DXP) to 2-C-methyl-D-erythritol 4-phosphate (MEP). The protein is 1-deoxy-D-xylulose 5-phosphate reductoisomerase of Acinetobacter baumannii (strain AB307-0294).